The chain runs to 310 residues: S-methyl-5'-thioadenosine phosphorylase (310 aa).

Phosphate-binding positions include Thr-20, 62-63, and 95-96; these read RH and SA. Met-197 serves as a coordination point for substrate. Phosphate is bound at residue Ser-198. 221-223 provides a ligand contact to substrate; it reads DYD.

The protein belongs to the PNP/MTAP phosphorylase family. MTAP subfamily. In terms of assembly, homotrimer.

The protein resides in the cytoplasm. Its subcellular location is the nucleus. The catalysed reaction is S-methyl-5'-thioadenosine + phosphate = 5-(methylsulfanyl)-alpha-D-ribose 1-phosphate + adenine. Its pathway is amino-acid biosynthesis; L-methionine biosynthesis via salvage pathway; S-methyl-5-thio-alpha-D-ribose 1-phosphate from S-methyl-5'-thioadenosine (phosphorylase route): step 1/1. Catalyzes the reversible phosphorylation of S-methyl-5'-thioadenosine (MTA) to adenine and 5-methylthioribose-1-phosphate. Involved in the breakdown of MTA, a major by-product of polyamine biosynthesis. Responsible for the first step in the methionine salvage pathway after MTA has been generated from S-adenosylmethionine. Has broad substrate specificity with 6-aminopurine nucleosides as preferred substrates. This chain is S-methyl-5'-thioadenosine phosphorylase, found in Neurospora crassa (strain ATCC 24698 / 74-OR23-1A / CBS 708.71 / DSM 1257 / FGSC 987).